The sequence spans 465 residues: Argininosuccinate lyase (465 aa).

This sequence belongs to the lyase 1 family. Argininosuccinate lyase subfamily.

Its subcellular location is the cytoplasm. The enzyme catalyses 2-(N(omega)-L-arginino)succinate = fumarate + L-arginine. It participates in amino-acid biosynthesis; L-arginine biosynthesis; L-arginine from L-ornithine and carbamoyl phosphate: step 3/3. This Bradyrhizobium diazoefficiens (strain JCM 10833 / BCRC 13528 / IAM 13628 / NBRC 14792 / USDA 110) protein is Argininosuccinate lyase.